Consider the following 394-residue polypeptide: MKDYTYSVTEINEYIKDLIEGDPYLTNVSVYGEISGVRPRKGHIFFSLVEENARLECVIFGGDNMGIRLQEGRMALVEGSVSVYIPHGTYRFICSNVRYLDQAGMYQIKFETTLKKLLEEGLLSRPKKTVPRFPRKIGIITSRDSAALQDVIRTARERKAPIEIYVFHTSVQGDSAREELIKALRKANEYDLDLVMIVRGGGSKEDLWVFNEEDVIREILRLRHPVVTGIGHEIDRVIADFVADVSMHTPTGAAEYVIPDASEIHEDLDSFFEKLITSLSNRFDMEERRLETLYFRLRMIGRRKLELNEFKIERVKELAAKLRKKLMDYFEHNQKKLDSLGRMLESLNPLRPLERGFVLVKKDEKIVKESTDLKRGDVVSLVFKDGTKKAQVIG.

It belongs to the XseA family. Heterooligomer composed of large and small subunits.

It is found in the cytoplasm. The catalysed reaction is Exonucleolytic cleavage in either 5'- to 3'- or 3'- to 5'-direction to yield nucleoside 5'-phosphates.. Its function is as follows. Bidirectionally degrades single-stranded DNA into large acid-insoluble oligonucleotides, which are then degraded further into small acid-soluble oligonucleotides. The chain is Exodeoxyribonuclease 7 large subunit from Thermotoga maritima (strain ATCC 43589 / DSM 3109 / JCM 10099 / NBRC 100826 / MSB8).